The following is a 135-amino-acid chain: MEIRTPNRLPFHRWAVFPVLLAQFVVLLLATLVLWQWKGSVSGYSGLCGGLIAWLPNVYFAWKAFRFSGARAAQAIVKSFYAGEAGKMILTAVLFALTFAGVKPLAPLAVFGVFVLTLLVSWFAPLLMNKRLSRP.

A run of 4 helical transmembrane segments spans residues 14–34 (WAVFPVLLAQFVVLLLATLVL), 41–61 (VSGYSGLCGGLIAWLPNVYFA), 82–102 (AGEAGKMILTAVLFALTFAGV), and 108–128 (LAVFGVFVLTLLVSWFAPLLM).

Belongs to the bacterial AtpI family.

The protein localises to the cell inner membrane. In terms of biological role, a possible function for this protein is to guide the assembly of the membrane sector of the ATPase enzyme complex. The polypeptide is ATP synthase protein I (atpI) (Pseudomonas putida (strain ATCC 47054 / DSM 6125 / CFBP 8728 / NCIMB 11950 / KT2440)).